We begin with the raw amino-acid sequence, 210 residues long: Uracil phosphoribosyltransferase (210 aa).

5-phospho-alpha-D-ribose 1-diphosphate-binding positions include Arg-78, Arg-103, and 130 to 138; that span reads DPMLATGGS. Residues Ile-195 and 200–202 contribute to the uracil site; that span reads GDA. 5-phospho-alpha-D-ribose 1-diphosphate is bound at residue Asp-201.

This sequence belongs to the UPRTase family. The cofactor is Mg(2+).

It catalyses the reaction UMP + diphosphate = 5-phospho-alpha-D-ribose 1-diphosphate + uracil. It functions in the pathway pyrimidine metabolism; UMP biosynthesis via salvage pathway; UMP from uracil: step 1/1. Allosterically activated by GTP. Catalyzes the conversion of uracil and 5-phospho-alpha-D-ribose 1-diphosphate (PRPP) to UMP and diphosphate. This is Uracil phosphoribosyltransferase from Leifsonia xyli subsp. xyli (strain CTCB07).